Here is a 244-residue protein sequence, read N- to C-terminus: UL16-binding protein 1 (244 aa).

Positions 1-25 (MAAAASPAFLLCLPLLHLLSGWSRA) are cleaved as a signal peptide. The MHC class I alpha-1 like stretch occupies residues 26-117 (GWVDTHCLCY…IQVENLIPIE (92 aa)). Cysteines 50 and 66 form a disulfide. Residue asparagine 82 is glycosylated (N-linked (GlcNAc...) asparagine). The interval 118-208 (PLTLQARMSC…MYWEQMLDPT (91 aa)) is MHC class I alpha-2 like. A disulfide bond links cysteine 127 and cysteine 190. Glycine 216 carries GPI-anchor amidated glycine lipidation. A propeptide spans 217 to 244 (TTQPKAMATTLSPWSLLIIFLCFILAGR) (removed in mature form).

Belongs to the MHC class I family. Interacts with KLRK1/NKG2D. Does not bind to beta2-microglobulin. As to quaternary structure, (Microbial infection) In CMV-infected cells, interacts with the viral glycoprotein UL16; this interaction causes ULBP1 retention in the endoplasmic reticulum and cis-Golgi and prevents binding to and activation of KLRK1/NKG2D, providing CMV with an immune evasion mechanism. In terms of tissue distribution, expressed in T-cells, B-cells, erythroleukemia cell lines and in a wide range of tissues including heart, brain, lung, liver, testis, lymph node, thymus, tonsil and bone marrow. Also found in fetal heart, brain, lung and liver.

Its subcellular location is the cell membrane. It localises to the endoplasmic reticulum. Functionally, binds and activates the KLRK1/NKG2D receptor, mediating natural killer cell cytotoxicity. This Homo sapiens (Human) protein is UL16-binding protein 1 (ULBP1).